Here is a 445-residue protein sequence, read N- to C-terminus: Exodeoxyribonuclease 7 large subunit (445 aa).

This sequence belongs to the XseA family. In terms of assembly, heterooligomer composed of large and small subunits.

It localises to the cytoplasm. The catalysed reaction is Exonucleolytic cleavage in either 5'- to 3'- or 3'- to 5'-direction to yield nucleoside 5'-phosphates.. In terms of biological role, bidirectionally degrades single-stranded DNA into large acid-insoluble oligonucleotides, which are then degraded further into small acid-soluble oligonucleotides. The sequence is that of Exodeoxyribonuclease 7 large subunit from Staphylococcus epidermidis (strain ATCC 35984 / DSM 28319 / BCRC 17069 / CCUG 31568 / BM 3577 / RP62A).